Here is a 107-residue protein sequence, read N- to C-terminus: Ig kappa chain V-VI region TEPC 601/TEPC 191 (107 aa).

A framework-1 region spans residues 1–23; that stretch reads EIVLTQSPAITAASLGQKVTITC. The cysteines at positions 23 and 87 are disulfide-linked. Positions 24-33 are complementarity-determining-1; the sequence is SASSSVSYMH. Residues 34 to 48 are framework-2; sequence WYQQKSGTSPKPWIY. The tract at residues 49 to 55 is complementarity-determining-2; the sequence is EISKLAS. Residues 56 to 87 form a framework-3 region; that stretch reads GVPARFSGSGSGTSYSLTISSMEAEDAAIYYC. The tract at residues 88–96 is complementarity-determining-3; the sequence is QQWNYPLIT. The segment at 97–106 is framework-4; it reads FGAGTKLELK.

The protein is Ig kappa chain V-VI region TEPC 601/TEPC 191 of Mus musculus (Mouse).